Reading from the N-terminus, the 288-residue chain is Probable syndecan (288 aa).

An N-terminal signal peptide occupies residues 1–26 (MILKLNFCLSTYSVLILLSLSTQAFA). Over 27–231 (ANQAKTKVVP…ETLANGFYAA (205 aa)) the chain is Extracellular. Residues 67–175 (EVNGSGYPTD…NIHNDEDFFT (109 aa)) are disordered. N-linked (GlcNAc...) asparagine glycosylation occurs at N69. 2 O-linked (Xyl...) (glycosaminoglycan) serine glycosylation sites follow: S71 and S86. The span at 89–104 (PPSSATTKSDKVTSPS) shows a compositional bias: polar residues. The span at 106–124 (AVVTAKPTTVPTTTASFKP) shows a compositional bias: low complexity. Acidic residues predominate over residues 141–164 (VEEDEDDDEDEDEDDEDDEEDFAD). O-linked (Xyl...) (glycosaminoglycan) serine glycosylation occurs at S214. The helical transmembrane segment at 232–252 (IAGGVLVAVITAILLVLFVVF) threads the bilayer. The Cytoplasmic portion of the chain corresponds to 253 to 288 (RIRKKDEGSYALDEPKQARPYASYGYTKASTKEFYA).

Belongs to the syndecan proteoglycan family.

The protein resides in the membrane. Its subcellular location is the cell surface. It localises to the cell junction. The protein localises to the cytoplasm. Functionally, cell surface proteoglycan that bears heparan sulfate. Required for correct mitotic spindle orientation of the ABar blastomere division plane and this may be through modulation of astral microtubule array, and in association with the wnt-signaling proteins mig-5 and dsh-2. Involved in the migration of AQR and PQR neurons, which descend from the Q neuroblasts. Promotes the axon guidance of D-type motor neurons. This is Probable syndecan from Caenorhabditis elegans.